The primary structure comprises 205 residues: UPF0316 protein Cthe_2213 (205 aa).

A run of 3 helical transmembrane segments spans residues Leu15–Val37, Leu44–Met64, and Phe70–Ile90.

The protein belongs to the UPF0316 family.

It localises to the cell membrane. This chain is UPF0316 protein Cthe_2213, found in Acetivibrio thermocellus (strain ATCC 27405 / DSM 1237 / JCM 9322 / NBRC 103400 / NCIMB 10682 / NRRL B-4536 / VPI 7372) (Clostridium thermocellum).